A 495-amino-acid polypeptide reads, in one-letter code: Genome polyprotein (495 aa).

The Extracellular segment spans residues 1–445 (MRCIGISNRD…LNQVFGTIYG (445 aa)). Disulfide bonds link Cys-3–Cys-30, Cys-60–Cys-121, Cys-74–Cys-105, and Cys-92–Cys-116. Asn-67 carries an N-linked (GlcNAc...) asparagine; by host glycan. The tract at residues 98-111 (DRGWGNGCGLFGKG) is fusion peptide. N-linked (GlcNAc...) asparagine; by host glycosylation is present at Asn-153. 2 disulfides stabilise this stretch: Cys-185–Cys-285 and Cys-302–Cys-333. Residues 446-466 (AAFSGVSWTMKILIGVIITCI) form a helical membrane-spanning segment. Residues 467-472 (GMNSRS) are Cytoplasmic-facing. A helical membrane pass occupies residues 473–493 (TSLSVSLVLVGVVTLYLGGMV). The Extracellular portion of the chain corresponds to 494-495 (HA).

In terms of assembly, homodimer; in the endoplasmic reticulum and Golgi. Interacts with protein prM. Interacts with non-structural protein 1. Post-translationally, N-glycosylated. Specific enzymatic cleavages in vivo yield mature proteins. Cleavages in the lumen of endoplasmic reticulum are performed by host signal peptidase, wereas cleavages in the cytoplasmic side are performed by serine protease NS3. Signal cleavage at the 2K-4B site requires a prior NS3 protease-mediated cleavage at the 4A-2K site.

The protein resides in the virion membrane. It is found in the host endoplasmic reticulum membrane. Its function is as follows. Binds to host cell surface receptor and mediates fusion between viral and cellular membranes. Envelope protein is synthesized in the endoplasmic reticulum in the form of heterodimer with protein prM. They play a role in virion budding in the ER, and the newly formed immature particle is covered with 60 spikes composed of heterodimer between precursor prM and envelope protein E. The virion is transported to the Golgi apparatus where the low pH causes dissociation of PrM-E heterodimers and formation of E homodimers. prM-E cleavage is inefficient, and many virions are only partially matured. These uncleaved prM would play a role in immune evasion. The protein is Genome polyprotein of Aedes aegypti (Yellowfever mosquito).